The chain runs to 299 residues: Taste receptor type 2 member 16 (299 aa).

Topologically, residues 1–5 are extracellular; sequence MVPTQ. A helical membrane pass occupies residues 6–26; it reads VTIFSIIMYVLESLVIIVQSC. Over 27–44 the chain is Cytoplasmic; the sequence is TTVAVLFREWMHFQRLSP. A helical membrane pass occupies residues 45 to 65; that stretch reads VEIILISLGISHFCLQWTSML. At 66–82 the chain is on the extracellular side; it reads YNFGTYSRPVLLFWKVS. A helical membrane pass occupies residues 83–103; the sequence is VVWEFMNVLTFWLTSLLAVLY. Over 104-125 the chain is Cytoplasmic; that stretch reads CVKVSSFSHPVFLWLRLKILKL. The chain crosses the membrane as a helical span at residues 126–146; sequence VLWLLLGALIASCLSIIPSVV. Residues 147 to 183 lie on the Extracellular side of the membrane; it reads KYHIQMELLTLDHLPKNSSLILRLQMFEWYFSNPFKM. Asparagine 163 carries an N-linked (GlcNAc...) asparagine glycan. The chain crosses the membrane as a helical span at residues 184–204; it reads IGFGVPFLVFLISIILLTVSL. The Cytoplasmic portion of the chain corresponds to 205-233; sequence VQHWGQMKHYSSSSSSLRAQCTVLKSLAT. Residues 234-254 traverse the membrane as a helical segment; that stretch reads FFIFFTSYFLTIVVSFIGTVF. Residues 255–258 are Extracellular-facing; sequence DKKS. The helical transmembrane segment at 259 to 279 threads the bilayer; that stretch reads WFWVCEAVIYGLVCIHFTSLM. Topologically, residues 280-299 are cytoplasmic; the sequence is MSNPTLKKALRLQFWSPESS.

It belongs to the G-protein coupled receptor T2R family. As to quaternary structure, interacts with RTP3 and RTP4. In terms of tissue distribution, expressed in subsets of taste receptor cells of the tongue and palate epithelium and exclusively in gustducin-positive cells. Expressed in the antrum and fundus (part of the stomach), duodenum and in gastric endocrine cells.

The protein resides in the cell membrane. Its function is as follows. Gustducin-coupled receptor implicated in the perception of bitter compounds in the oral cavity and the gastrointestinal tract. Signals through PLCB2 and the calcium-regulated cation channel TRPM5. This is Taste receptor type 2 member 16 (Tas2r16) from Rattus norvegicus (Rat).